We begin with the raw amino-acid sequence, 493 residues long: Cytochrome P450 2E1 (493 aa).

Substrate is bound at residue 298–303 (FAGTET). Cys437 lines the heme pocket.

Belongs to the cytochrome P450 family. As to quaternary structure, interacts with chaperones HSP70 and HSP90; this interaction is required for initial targeting to mitochondria. Requires heme as cofactor.

It localises to the endoplasmic reticulum membrane. Its subcellular location is the microsome membrane. It is found in the mitochondrion inner membrane. The catalysed reaction is an organic molecule + reduced [NADPH--hemoprotein reductase] + O2 = an alcohol + oxidized [NADPH--hemoprotein reductase] + H2O + H(+). It catalyses the reaction (5Z,8Z,11Z)-eicosatrienoate + reduced [NADPH--hemoprotein reductase] + O2 = 19-hydroxy-(5Z,8Z,11Z)-eicosatrienoate + oxidized [NADPH--hemoprotein reductase] + H2O + H(+). It carries out the reaction (5Z,8Z,11Z,14Z,17Z)-eicosapentaenoate + reduced [NADPH--hemoprotein reductase] + O2 = 19-hydroxy-(5Z,8Z,11Z,14Z,17Z)-eicosapentaenoate + oxidized [NADPH--hemoprotein reductase] + H2O + H(+). The enzyme catalyses (4Z,7Z,10Z,13Z,16Z,19Z)-docosahexaenoate + reduced [NADPH--hemoprotein reductase] + O2 = 21-hydroxy-(4Z,7Z,10Z,13Z,16Z,19Z)-docosahexaenoate + oxidized [NADPH--hemoprotein reductase] + H2O + H(+). The catalysed reaction is dodecanoate + reduced [NADPH--hemoprotein reductase] + O2 = 11-hydroxydodecanoate + oxidized [NADPH--hemoprotein reductase] + H2O + H(+). It catalyses the reaction tetradecanoate + reduced [NADPH--hemoprotein reductase] + O2 = 13-hydroxytetradecanoate + oxidized [NADPH--hemoprotein reductase] + H2O + H(+). It carries out the reaction 4-nitrophenol + NADPH + O2 + H(+) = 4-nitrocatechol + NADP(+) + H2O. It functions in the pathway lipid metabolism; fatty acid metabolism. The omega-1 hydroxylase activity is stimulated by cytochrome b5. In terms of biological role, a cytochrome P450 monooxygenase involved in the metabolism of fatty acids. Mechanistically, uses molecular oxygen inserting one oxygen atom into a substrate, and reducing the second into a water molecule, with two electrons provided by NADPH via cytochrome P450 reductase (NADPH--hemoprotein reductase). Catalyzes the hydroxylation of carbon-hydrogen bonds. Hydroxylates fatty acids specifically at the omega-1 position displaying the highest catalytic activity for saturated fatty acids. May be involved in the oxidative metabolism of xenobiotics. This chain is Cytochrome P450 2E1, found in Rattus norvegicus (Rat).